A 483-amino-acid polypeptide reads, in one-letter code: Acyl-coenzyme A thioesterase 2, mitochondrial (483 aa).

Residue K104 is modified to N6-acetyllysine. Residues S294, D388, and H422 each act as charge relay system in the active site. K470 bears the N6-succinyllysine mark. The Microbody targeting signal signature appears at 481–483; the sequence is SKV.

This sequence belongs to the C/M/P thioester hydrolase family. Monomer. As to expression, strongest expression in heart, liver, muscle and kidney. Weak in placenta and pancreas.

It localises to the mitochondrion. It catalyses the reaction hexadecanoyl-CoA + H2O = hexadecanoate + CoA + H(+). It carries out the reaction tetradecanoyl-CoA + H2O = tetradecanoate + CoA + H(+). The catalysed reaction is octadecanoyl-CoA + H2O = octadecanoate + CoA + H(+). The enzyme catalyses eicosanoyl-CoA + H2O = eicosanoate + CoA + H(+). It catalyses the reaction decanoyl-CoA + H2O = decanoate + CoA + H(+). It carries out the reaction dodecanoyl-CoA + H2O = dodecanoate + CoA + H(+). The catalysed reaction is (9Z)-octadecenoyl-CoA + H2O = (9Z)-octadecenoate + CoA + H(+). The enzyme catalyses (9Z)-hexadecenoyl-CoA + H2O = (9Z)-hexadecenoate + CoA + H(+). It catalyses the reaction (9E)-octadecenoyl-CoA + H2O = (9E)-octadecenoate + CoA + H(+). It carries out the reaction (9Z,12Z)-octadecadienoyl-CoA + H2O = (9Z,12Z)-octadecadienoate + CoA + H(+). It participates in lipid metabolism; fatty acid metabolism. Its function is as follows. Catalyzes the hydrolysis of acyl-CoAs into free fatty acids and coenzyme A (CoASH), regulating their respective intracellular levels. Displays higher activity toward long chain acyl CoAs (C14-C20). The enzyme is involved in enhancing the hepatic fatty acid oxidation in mitochondria. In Homo sapiens (Human), this protein is Acyl-coenzyme A thioesterase 2, mitochondrial (ACOT2).